We begin with the raw amino-acid sequence, 161 residues long: Beta-lactoglobulin-1 (161 aa).

Intrachain disulfides connect Cys66/Cys159 and Cys106/Cys119.

The protein belongs to the calycin superfamily. Lipocalin family. In terms of assembly, monomer. Synthesized in mammary gland and secreted in milk.

It localises to the secreted. Its function is as follows. Primary component of whey, it binds retinol and is probably involved in the transport of that molecule. The chain is Beta-lactoglobulin-1 (LGB1) from Canis lupus familiaris (Dog).